Reading from the N-terminus, the 439-residue chain is L-tryptophan decarboxylase (439 aa).

This sequence belongs to the phosphatidylserine decarboxylase family.

It catalyses the reaction L-tryptophan + H(+) = tryptamine + CO2. Its pathway is secondary metabolite biosynthesis. L-tryptophan decarboxylase; part of the gene cluster that mediates the biosynthesis of psilocybin, a psychotropic tryptamine-derived natural product. The first step in the pathway is the decarboxylation of L-tryptophan to tryptamine by the decarboxylase psiD. 4-hydroxy-L-tryptophan is accepted as substrate by psiD as well. The cytochrome P450 monooxygenase psiH then converts tryptamine to 4-hydroxytryptamine. The kinase psiK catalyzes the 4-O-phosphorylation step by converting 4-hydroxytryptamine into norbaeocystin. The methyltransferase psiM then catalyzes iterative methyl transfer to the amino group of norbaeocystin to yield psilocybin via a monomethylated intermediate, baeocystin. 4-hydroxy-6-methyl-l-tryptophancan also be converted the decarboxylase PsiD, kinase PsiK, and methyltransferase PsiM into respectively 6-methyl-norbaeocystin, 6-methylbaeocystin, and 6-methylpsilocybin. The sequence is that of L-tryptophan decarboxylase from Psilocybe cubensis (Psychedelic mushroom).